The primary structure comprises 124 residues: Fluoride-specific ion channel FluC (124 aa).

4 helical membrane passes run 4–24, 35–55, 67–87, and 96–116; these read IVLL…LAGL, LGTF…WGVC, VVLL…TFES, and WLAF…LLWL. 2 residues coordinate Na(+): Gly-75 and Thr-78.

This sequence belongs to the fluoride channel Fluc/FEX (TC 1.A.43) family.

The protein resides in the cell inner membrane. It carries out the reaction fluoride(in) = fluoride(out). With respect to regulation, na(+) is not transported, but it plays an essential structural role and its presence is essential for fluoride channel function. In terms of biological role, fluoride-specific ion channel. Important for reducing fluoride concentration in the cell, thus reducing its toxicity. The sequence is that of Fluoride-specific ion channel FluC from Nitratidesulfovibrio vulgaris (strain DSM 19637 / Miyazaki F) (Desulfovibrio vulgaris).